A 172-amino-acid polypeptide reads, in one-letter code: NADH-quinone oxidoreductase subunit B (172 aa).

[4Fe-4S] cluster-binding residues include C46, C47, C111, and C141.

Belongs to the complex I 20 kDa subunit family. In terms of assembly, NDH-1 is composed of 14 different subunits. Subunits NuoB, C, D, E, F, and G constitute the peripheral sector of the complex. It depends on [4Fe-4S] cluster as a cofactor.

The protein resides in the cell membrane. It carries out the reaction a quinone + NADH + 5 H(+)(in) = a quinol + NAD(+) + 4 H(+)(out). In terms of biological role, NDH-1 shuttles electrons from NADH, via FMN and iron-sulfur (Fe-S) centers, to quinones in the respiratory chain. The immediate electron acceptor for the enzyme in this species is believed to be a menaquinone. Couples the redox reaction to proton translocation (for every two electrons transferred, four hydrogen ions are translocated across the cytoplasmic membrane), and thus conserves the redox energy in a proton gradient. The polypeptide is NADH-quinone oxidoreductase subunit B (Bacillus cytotoxicus (strain DSM 22905 / CIP 110041 / 391-98 / NVH 391-98)).